The sequence spans 232 residues: 2-C-methyl-D-erythritol 4-phosphate cytidylyltransferase (232 aa).

Belongs to the IspD/TarI cytidylyltransferase family. IspD subfamily.

The catalysed reaction is 2-C-methyl-D-erythritol 4-phosphate + CTP + H(+) = 4-CDP-2-C-methyl-D-erythritol + diphosphate. Its pathway is isoprenoid biosynthesis; isopentenyl diphosphate biosynthesis via DXP pathway; isopentenyl diphosphate from 1-deoxy-D-xylulose 5-phosphate: step 2/6. Its function is as follows. Catalyzes the formation of 4-diphosphocytidyl-2-C-methyl-D-erythritol from CTP and 2-C-methyl-D-erythritol 4-phosphate (MEP). The chain is 2-C-methyl-D-erythritol 4-phosphate cytidylyltransferase from Rhodococcus erythropolis (strain PR4 / NBRC 100887).